Consider the following 176-residue polypeptide: Inner membrane-spanning protein YciB (176 aa).

6 helical membrane passes run 3-23, 24-44, 49-69, 81-101, 121-141, and 149-169; these read FLFDLFPIILFFAAFKVWGIF, TATAVAIVATLAQVAWVAFRH, TMLWVSLGVIVVFGGATLVLH, LYWLFAIGLLAARYAFGNNLI, VAWALFFAVLGLANLYVVHNF, and FKLFGTTGAMVVFIILQSLWL.

Belongs to the YciB family.

It localises to the cell inner membrane. Functionally, plays a role in cell envelope biogenesis, maintenance of cell envelope integrity and membrane homeostasis. The protein is Inner membrane-spanning protein YciB of Burkholderia vietnamiensis (strain G4 / LMG 22486) (Burkholderia cepacia (strain R1808)).